The sequence spans 94 residues: Phosphoribosyl-ATP pyrophosphatase (94 aa).

This sequence belongs to the PRA-PH family.

It localises to the cytoplasm. The enzyme catalyses 1-(5-phospho-beta-D-ribosyl)-ATP + H2O = 1-(5-phospho-beta-D-ribosyl)-5'-AMP + diphosphate + H(+). The protein operates within amino-acid biosynthesis; L-histidine biosynthesis; L-histidine from 5-phospho-alpha-D-ribose 1-diphosphate: step 2/9. The polypeptide is Phosphoribosyl-ATP pyrophosphatase (Pyrobaculum neutrophilum (strain DSM 2338 / JCM 9278 / NBRC 100436 / V24Sta) (Thermoproteus neutrophilus)).